Reading from the N-terminus, the 472-residue chain is Guanine nucleotide-binding protein alpha-1 subunit (472 aa).

Gly-2 carries the N-myristoyl glycine lipid modification. A lipid anchor (S-palmitoyl cysteine) is attached at Cys-3. The G-alpha domain occupies 40 to 472; it reads NEIKLLLLGA…QQNLKKIGII (433 aa). The G1 motif stretch occupies residues 43–56; sequence KLLLLGAGESGKST. GTP contacts are provided by Glu-51, Ser-52, Gly-53, Lys-54, Ser-55, and Thr-56. Residue Ser-55 participates in Mg(2+) binding. Positions 127–235 are insert; not present in other G-proteins; that stretch reads LDYINASVAG…REIQGQNRRN (109 aa). Residues 162–199 form a disordered region; it reads GRAKAAFDEDGNISNVKSDTDRDAETVTQNEDADRNNS. Lys-165 participates in a covalent cross-link: Glycyl lysine isopeptide (Lys-Gly) (interchain with G-Cter in ubiquitin). The interval 292 to 300 is G2 motif; the sequence is DILKGRIKT. Leu-294, Thr-300, Gly-322, Asn-388, Lys-389, Asp-391, and Ala-444 together coordinate GTP. Residue Thr-300 participates in Mg(2+) binding. Residues 315 to 324 are G3 motif; sequence FKVLDAGGQR. Residues 384–391 are G4 motif; it reads ILFLNKID. The G5 motif stretch occupies residues 442-447; the sequence is TCATDT.

This sequence belongs to the G-alpha family. G(q) subfamily. In terms of assembly, g proteins are composed of 3 units; alpha, beta and gamma. The alpha chain contains the guanine nucleotide binding site. In its GDP-bound form, binds to the G protein beta-gamma dimer STE4-STE18. Directly interacts with the beta subunit STE4. Probably forms preactivation complexes with unligated receptors STE2 and STE3. Interacts with FUS3. Pheromone-induced activation of GPA1 increases its association with FUS3. Interacts with SCP160. SCP160 binds specifically to the GTP-bound form of GPA1. Interacts with the phosphatidylinositol 3-kinase (PI3K) subunits VPS15 and VPS34 at the endosome. The GTP-bound form of GPA1 binds directly and selectively to the catalytic subunit VPS34, while the GDP-bound form binds to VPS15, which appears to function as an alternative G protein beta subunit for GPA1. Interacts with regulators of G protein signaling (RGS) proteins MDM1, RAX1, RGS2 and SST2, but SST2 alone binds preferentially to the transition state conformation of GPA1, indicating that it acts as a GAP for this G protein. The cofactor is Mg(2+). Post-translationally, N-myristoylation by NMT1 is pheromone-stimulated and required for palmitoylation of Cys-3. This lipid modification anchors the protein to membranes. Depalmitoylated by YLR118C/APT1. Monoubiquitination targets the protein for degradation to the vacuole, and polyubiquitination tags the protein for degradation by the proteasome. This may be an additional signaling regulation mechanism.

It localises to the cell membrane. The protein resides in the endosome membrane. Alternates between an inactive form bound to GDP and an active form bound to GTP. Activated by the G protein coupled receptors (GPCRs) STE2 and STE3, which serve as guanine nucleotide-exchange factors (GEFs), and inactivated by SST2, probably acting as a GTPase-activating protein (GAP). Alpha subunit of the heterotrimeric guanine nucleotide-binding protein (G protein) that mediates mating pheromone signal transduction. Binding of alpha-factor or a-factor to its cognate transmembrane receptor STE2 and STE3, respectively, allows the receptor to serve as a guanine nucleotide exchange factor (GEF) on GPA1. The exchange of GDP for GTP on the G protein alpha subunit alters its interaction with the G protein beta subunit STE4, leading to dissociation of the G protein beta-gamma dimer STE4-STE18. The dissociated subunits activate downstream effectors to activate the mating response pathway and induce changes necessary to produce mating-competent cells. STE4-STE18 activate the downstream pheromone signaling MAP kinase cascade leading to expression of mating-specific genes, inducing cell cycle arrest in G1, promoting polarized cell growth to form mating projections (shmoos), and establishing the changes in plasma membrane, cell wall and nuclear envelope to permit cell-cell fusion (plasmogamy) and fusion of the two haploid nuclei (karyogamy). GPA1 transmits a signal that requires direct binding to the effector enzyme PI3K located at the endosome, promoting increased PI3 production. The intrinsic GTPase activity of GPA1 determines the duration of signaling, and is dramatically accelerated by the RGS protein SST2. In unstimulated cells, GDP-bound GPA1 sequesters the G protein beta-gamma subunit STE4-STE18, preventing it from activating the downstream effectors. Also down-regulates the signal by inhibiting the pheromone-induced accumulation of FUS3 in the nucleus. The polypeptide is Guanine nucleotide-binding protein alpha-1 subunit (GPA1) (Saccharomyces cerevisiae (strain ATCC 204508 / S288c) (Baker's yeast)).